We begin with the raw amino-acid sequence, 31 residues long: Cytochrome b6-f complex subunit 6 (31 aa).

The helical transmembrane segment at 3-23 threads the bilayer; sequence LIIGYIILLACAFGLAAGLYF.

It belongs to the PetL family. In terms of assembly, the 4 large subunits of the cytochrome b6-f complex are cytochrome b6, subunit IV (17 kDa polypeptide, PetD), cytochrome f and the Rieske protein, while the 4 small subunits are PetG, PetL, PetM and PetN. The complex functions as a dimer.

Its subcellular location is the plastid. It localises to the chloroplast thylakoid membrane. In terms of biological role, component of the cytochrome b6-f complex, which mediates electron transfer between photosystem II (PSII) and photosystem I (PSI), cyclic electron flow around PSI, and state transitions. PetL is important for photoautotrophic growth as well as for electron transfer efficiency and stability of the cytochrome b6-f complex. In Guillardia theta (Cryptophyte), this protein is Cytochrome b6-f complex subunit 6.